A 73-amino-acid polypeptide reads, in one-letter code: Neurogranin (73 aa).

Residues 26–55 form the IQ domain; it reads ANAAAAKIQASFRGHMTRKKIKGGEIDRKT. A Phosphoserine; by PKC modification is found at Ser36. Over residues 47-59 the composition is skewed to basic and acidic residues; sequence KGGEIDRKTKDAE. A disordered region spans residues 47 to 73; that stretch reads KGGEIDRKTKDAECANSTRGGDLRNGD.

The protein belongs to the neurogranin family.

Its function is as follows. Acts as a 'third messenger' substrate of protein kinase C-mediated molecular cascades during synaptic development and remodeling. Binds to calmodulin in the absence of calcium. This is Neurogranin (NRGN) from Serinus canaria (Island canary).